A 134-amino-acid chain; its full sequence is MPADLSGTWNLLSSDNFEGYMLALGIDFATRKIAKLLKPQKVIEQNGDSFTIQTCSSLRNYLVKFKVGEEFEEDNKGLDNRKCTSLVTWENDKLTCVQRGEKKNRGWSHWIEGDQLHLEMFCEGQVCKQTFQRA.

It belongs to the calycin superfamily. Fatty-acid binding protein (FABP) family. In terms of tissue distribution, highly expressed in white adipose tissue and mammary gland.

It localises to the cytoplasm. In terms of biological role, intracellular transport of retinol. The protein is Retinoid-binding protein 7 (Rbp7) of Mus musculus (Mouse).